We begin with the raw amino-acid sequence, 322 residues long: DNA repair and recombination protein RadA (322 aa).

Residue 105–112 coordinates ATP; sequence GMYGSGKT.

The protein belongs to the eukaryotic RecA-like protein family.

Involved in DNA repair and in homologous recombination. Binds and assemble on single-stranded DNA to form a nucleoprotein filament. Hydrolyzes ATP in a ssDNA-dependent manner and promotes DNA strand exchange between homologous DNA molecules. The protein is DNA repair and recombination protein RadA of Methanococcus maripaludis (strain C5 / ATCC BAA-1333).